A 415-amino-acid chain; its full sequence is Dynein assembly factor with WD repeat domains 1 (415 aa).

8 WD repeats span residues 90-129 (AHIL…ELHT), 132-174 (GHKN…HTFR), 175-214 (GHTA…EVVT), 217-256 (GHLA…KVHT), 259-298 (GHCA…YVAT), 301-340 (GHDD…CVTK), 343-384 (GHEG…QVLE), and 386-415 (HTDE…RIWR).

The protein belongs to the WD repeat WDR69 family. In terms of assembly, interacts with IFT46. In terms of tissue distribution, in early mouse embryos, expression is limited to distal, motile ciliated cells of the node.

The protein localises to the cytoplasm. The protein resides in the cytoskeleton. It localises to the flagellum basal body. Its subcellular location is the flagellum axoneme. In terms of biological role, required for axonemal dynein assembly and ciliary motility in ciliated organs, including Kupffer's vesicle, during embryogenesis. Facilitates the onset of robust cilia motility during development. The polypeptide is Dynein assembly factor with WD repeat domains 1 (Mus musculus (Mouse)).